The chain runs to 337 residues: MSLSDNFADSLISAPPIRVICLVGPTGAGKTAAALHLARTFGGGVVNADSRQVYRDFPVITAQPSPEERAVCPHLLYGFLPSTEKISAGVWTDKATVVIEELCREEPGHNTSRQATSRPDGLVPLLVGGTGLYLKTLLDGIADIPRVDPAIGARLERECDALGAPALHARLASIDPDYAARIHPNDRQRAVRALEVHEGTGHALSWWHARPVPRPRYAALRIGMDMSLDELTPRLDRRIDLMLEAGALDEARAARTVCDDPAAPGWSGIGCAELYRYLTGELPWAEARLLWLRNTRAYAKRQLTWFRADKRIHWVRPDDLDAMAALACAFLRGETAE.

24–31 provides a ligand contact to ATP; sequence GPTGAGKT. Residue 26-31 coordinates substrate; it reads TGAGKT. Interaction with substrate tRNA regions lie at residues 49–52 and 188–192; these read DSRQ and QRAVR.

The protein belongs to the IPP transferase family. Monomer. The cofactor is Mg(2+).

The catalysed reaction is adenosine(37) in tRNA + dimethylallyl diphosphate = N(6)-dimethylallyladenosine(37) in tRNA + diphosphate. Functionally, catalyzes the transfer of a dimethylallyl group onto the adenine at position 37 in tRNAs that read codons beginning with uridine, leading to the formation of N6-(dimethylallyl)adenosine (i(6)A). The sequence is that of tRNA dimethylallyltransferase from Nitratidesulfovibrio vulgaris (strain DSM 19637 / Miyazaki F) (Desulfovibrio vulgaris).